The following is a 322-amino-acid chain: Prephenate dehydratase (322 aa).

Positions arginine 5–methionine 191 constitute a Prephenate dehydratase domain. The ACT domain maps to serine 205–proline 282. A disordered region spans residues alanine 286–leucine 322.

As to quaternary structure, homodimer.

The catalysed reaction is prephenate + H(+) = 3-phenylpyruvate + CO2 + H2O. It participates in amino-acid biosynthesis; L-phenylalanine biosynthesis; phenylpyruvate from prephenate: step 1/1. This is Prephenate dehydratase (pheA) from Mycobacterium leprae (strain Br4923).